The chain runs to 316 residues: Adenine deaminase (316 aa).

H14, H16, and H194 together coordinate Zn(2+). E197 (proton donor) is an active-site residue. Residue D275 coordinates Zn(2+). D276 lines the substrate pocket.

It belongs to the metallo-dependent hydrolases superfamily. Adenosine and AMP deaminases family. Adenine deaminase type 2 subfamily. It depends on Zn(2+) as a cofactor.

It carries out the reaction adenine + H2O + H(+) = hypoxanthine + NH4(+). In terms of biological role, catalyzes the hydrolytic deamination of adenine to hypoxanthine. Plays an important role in the purine salvage pathway and in nitrogen catabolism. The sequence is that of Adenine deaminase from Bordetella avium (strain 197N).